The sequence spans 836 residues: Translation initiation factor IF-2 (836 aa).

A disordered region spans residues 1-233 (MSDTDGKKPL…RSLAAMKRKQ (233 aa)). Residues 18–27 (SGQVKQSFSH) are compositionally biased toward polar residues. The segment covering 50–60 (SGSSTTTSSPS) has biased composition (low complexity). Positions 88-156 (KLREVEDAKR…AARRAEEAKR (69 aa)) are enriched in basic and acidic residues. Residues 167–176 (PAESRASAPP) show a composition bias toward low complexity. The span at 185–206 (SRKEREREADRDRTTKKDDSRR) shows a compositional bias: basic and acidic residues. Residues 333 to 501 (PRPPIITIMG…NIALQAEILD (169 aa)) enclose the tr-type G domain. A G1 region spans residues 342–349 (GHVDHGKT). 342 to 349 (GHVDHGKT) is a binding site for GTP. Positions 367-371 (GITQH) are G2. The tract at residues 389-392 (DTPG) is G3. GTP contacts are provided by residues 389-393 (DTPGH) and 443-446 (NKID). The interval 443–446 (NKID) is G4. The G5 stretch occupies residues 479–481 (SAK).

It belongs to the TRAFAC class translation factor GTPase superfamily. Classic translation factor GTPase family. IF-2 subfamily.

It localises to the cytoplasm. One of the essential components for the initiation of protein synthesis. Protects formylmethionyl-tRNA from spontaneous hydrolysis and promotes its binding to the 30S ribosomal subunits. Also involved in the hydrolysis of GTP during the formation of the 70S ribosomal complex. The protein is Translation initiation factor IF-2 of Cereibacter sphaeroides (strain ATCC 17023 / DSM 158 / JCM 6121 / CCUG 31486 / LMG 2827 / NBRC 12203 / NCIMB 8253 / ATH 2.4.1.) (Rhodobacter sphaeroides).